A 971-amino-acid chain; its full sequence is uncharacterized protein (971 aa).

Residues 1-24 (MQSNLLKVLGVLAIVATLVCFIFA) form the signal peptide. The disordered stretch occupies residues 127-146 (RTRPGKSNLDDSGQMIPIPR). Helical transmembrane passes span 611–631 (IKAI…LGFA), 721–741 (LGLS…IVII), 753–773 (AFMA…FLLF), 795–815 (VVMM…LDFV), 832–852 (FIGT…INWF), and 865–885 (GVNM…YGYV). Residues 933-971 (TGRAKSRLEQRNRTLEHAEQNSKKYKKRIGENTNEETLK) are disordered. Residues 938–954 (SRLEQRNRTLEHAEQNS) are compositionally biased toward basic and acidic residues.

It belongs to the TrbL/VirB6 family.

It localises to the cell membrane. This is an uncharacterized protein from Rickettsia prowazekii (strain Madrid E).